The following is a 2485-amino-acid chain: Tyrosine-protein phosphatase non-receptor type 13 (2485 aa).

Residues 3-190 (VSLAEALEVR…SGTDQLSCNS (188 aa)) form the KIND domain. The interval 186 to 220 (LSCNSEQKPDRSQAIRDRLRGKGLPTGRSSTSDVL) is disordered. Residues 192–205 (QKPDRSQAIRDRLR) are compositionally biased toward basic and acidic residues. Phosphoserine is present on Ser240. The interval 260–283 (SDNSGREDSENTFSPYQFKTSGPE) is disordered. The segment covering 270-279 (NTFSPYQFKT) has biased composition (polar residues). A phosphoserine mark is found at Ser301 and Ser302. The segment at 433–467 (RSEASKRFESSSGLPGVDETLSQGQSQRPSRQYET) is disordered. Residues 452–465 (TLSQGQSQRPSRQY) are compositionally biased toward polar residues. Residues 469–504 (FEGNLINQEIMLKRQEEELMQLQAKMALRQSRLSLY) adopt a coiled-coil conformation. The region spanning 572-872 (RKVNIMLLNG…YQHKFQLQMR (301 aa)) is the FERM domain. 5 positions are modified to phosphoserine: Ser890, Ser897, Ser908, Ser911, and Ser914. Disordered stretches follow at residues 947-975 (QNSS…DLSQ) and 995-1049 (TVAE…IEDP). A compositionally biased stretch (basic and acidic residues) spans 950 to 971 (SKEKNDKASWEEKPREMSKSYH). Positions 1020–1032 (KLNNSKSVASLNR) are enriched in polar residues. Residues Ser1029, Ser1033, and Ser1085 each carry the phosphoserine modification. Over residues 1033 to 1042 (SPERRKHESD) the composition is skewed to basic and acidic residues. Residues 1093 to 1178 (LVNLKKDAKY…EDVTLVISQP (86 aa)) enclose the PDZ 1 domain. Disordered regions lie at residues 1227–1258 (HISE…SLSQ) and 1273–1362 (TWQE…SPPK). 3 stretches are compositionally biased toward polar residues: residues 1243–1258 (SLSS…SLSQ), 1273–1288 (TWQE…SVIS), and 1327–1359 (TYSS…FSSS). PDZ domains lie at 1368 to 1452 (EVEL…LEKG) and 1501 to 1588 (EVKL…LCRP). Residues 1608–1630 (AQVLPNSSKDSSQPSCVEQSTSS) show a composition bias toward polar residues. Disordered regions lie at residues 1608–1665 (AQVL…DLVT) and 1715–1751 (PNKP…SSMD). Low complexity predominate over residues 1736-1749 (QSYQPQSESASSSS). 2 PDZ domains span residues 1788 to 1868 (LITL…IGRV) and 1882 to 1965 (PDIT…ATRN). A disordered region spans residues 1971–1996 (PSSKRSAVSAPKSTKGNGSYSVGSCS). Residues 1973 to 1996 (SKRSAVSAPKSTKGNGSYSVGSCS) show a composition bias toward polar residues. Residues 2213–2467 (PSKELENLQE…IFCYQVILYV (255 aa)) enclose the Tyrosine-protein phosphatase domain. Residues Asp2378, 2408 to 2414 (CSAGIGR), and Gln2452 each bind substrate. Cys2408 functions as the Phosphocysteine intermediate in the catalytic mechanism. The interval 2408-2414 (CSAGIGR) is substrate.

The protein belongs to the protein-tyrosine phosphatase family. Non-receptor class subfamily. Interacts (via the first PDZ domain) with PLEKHA1 and PLEKHA2. Interacts (via the second PDZ domain) with TNFRSF6 (Fas receptor) (via C-terminus). Interacts (via the second PDZ domain) with TRIP6 (via the third LIM domain and C-terminus). Interacts (via the third PDZ domain) with NGFR (via C-terminal SVP motif) and PKN2 (via C-terminus). Interacts (via the second or fourth PDZ domains) with PDLIM4 (via C-terminus only or via combined C-terminus and LIM domain, but not LIM domain only). Found in a complex with PDLIM4 and TRIP6. Interacts with PDLIM4; this interaction results in dephosphorylation of SRC 'Tyr-419' by this protein leading to its inactivation. Interacts with BRD7. Interacts with RAPGEF6. Interacts with ARHGAP29. Interacts with PIK3R2; dephosphorylates PIK3R2. Interacts with FBXL2. Interacts (via the FERM domain) with ENTR1. Found in a complex with ENTR1, PTPN13 and GIT1. In terms of tissue distribution, expressed in keratinocytes (at protein level). Present in most tissues with the exception of the liver and skeletal muscle. Most abundant in lung, kidney and fetal brain.

It localises to the cytoplasm. Its subcellular location is the cytoskeleton. It is found in the nucleus. The protein resides in the cell projection. The protein localises to the lamellipodium. The catalysed reaction is O-phospho-L-tyrosyl-[protein] + H2O = L-tyrosyl-[protein] + phosphate. In terms of biological role, tyrosine phosphatase which negatively regulates FAS-induced apoptosis and NGFR-mediated pro-apoptotic signaling. May regulate phosphoinositide 3-kinase (PI3K) signaling through dephosphorylation of PIK3R2. The protein is Tyrosine-protein phosphatase non-receptor type 13 (PTPN13) of Homo sapiens (Human).